A 136-amino-acid chain; its full sequence is S-protein homolog 25 (136 aa).

Residues 1-20 form the signal peptide; sequence MNHSVFVILITITYFGLNQA. Asparagine 71 and asparagine 84 each carry an N-linked (GlcNAc...) asparagine glycan.

It belongs to the plant self-incompatibility (S1) protein family.

The protein resides in the secreted. The sequence is that of S-protein homolog 25 from Arabidopsis thaliana (Mouse-ear cress).